Consider the following 151-residue polypeptide: Probable cGMP 3',5'-cyclic phosphodiesterase subunit delta (151 aa).

Belongs to the PDE6D/unc-119 family. In terms of assembly, interacts with Pde6.

It is found in the nucleus. The protein resides in the cytoplasm. This chain is Probable cGMP 3',5'-cyclic phosphodiesterase subunit delta, found in Culex quinquefasciatus (Southern house mosquito).